The following is a 176-amino-acid chain: NAD(P)H-quinone oxidoreductase subunit 6, chloroplastic (176 aa).

5 consecutive transmembrane segments (helical) span residues 10–30 (ILML…VLLT), 33–53 (IYSA…YFLL), 60–80 (VAQL…AVMF), 95–115 (IGDG…MTTI), and 152–172 (FYLP…GAIT).

This sequence belongs to the complex I subunit 6 family. As to quaternary structure, NDH is composed of at least 16 different subunits, 5 of which are encoded in the nucleus.

Its subcellular location is the plastid. The protein resides in the chloroplast thylakoid membrane. The catalysed reaction is a plastoquinone + NADH + (n+1) H(+)(in) = a plastoquinol + NAD(+) + n H(+)(out). It catalyses the reaction a plastoquinone + NADPH + (n+1) H(+)(in) = a plastoquinol + NADP(+) + n H(+)(out). In terms of biological role, NDH shuttles electrons from NAD(P)H:plastoquinone, via FMN and iron-sulfur (Fe-S) centers, to quinones in the photosynthetic chain and possibly in a chloroplast respiratory chain. The immediate electron acceptor for the enzyme in this species is believed to be plastoquinone. Couples the redox reaction to proton translocation, and thus conserves the redox energy in a proton gradient. In Triticum aestivum (Wheat), this protein is NAD(P)H-quinone oxidoreductase subunit 6, chloroplastic (ndhG).